The sequence spans 147 residues: Transthyretin (147 aa).

Positions 1-20 (MASFRLFLLCLAGLVFVSEA) are cleaved as a signal peptide. Cys30 is subject to Sulfocysteine. Lys35 is a binding site for L-thyroxine. Glu62 is subject to 4-carboxyglutamate. Phosphoserine is present on Ser72. Position 74 (Glu74) interacts with L-thyroxine. Asn118 is a glycosylation site (N-linked (GlcNAc...) asparagine). Ser137 is an L-thyroxine binding site.

It belongs to the transthyretin family. Homotetramer. Dimer of dimers. In the homotetramer, subunits assemble around a central channel that can accommodate two ligand molecules. Interacts with RBP4. Sulfonation of the reactive cysteine Cys-30 enhances the stability of the native conformation of TTR, avoiding misassembly of the protein leading to amyloid formation. In terms of tissue distribution, detected in serum (at protein level).

It localises to the secreted. In terms of biological role, thyroid hormone-binding protein. Probably transports thyroxine from the bloodstream to the brain. This is Transthyretin (TTR) from Bos taurus (Bovine).